Consider the following 212-residue polypeptide: MIAKLKGLIDSLGDDWAVVDCNGVGYLVACSSKTLARLETGTAAALFVETQVREDAISLFGFLETGERDWFRLLTTVQGVGAKVALAILSVASPDQLLQIIAAQDKAGLTRANGVGPKLAVRILTELKDKAGKIALGGFSPGGIKDALSASAPLPAASGRMEDAVSALVNLGYKRLEAFQAVGETARELGDEADSSALIRAALKHLGKGLLG.

The domain I stretch occupies residues 1–63 (MIAKLKGLID…EDAISLFGFL (63 aa)). The interval 64–142 (ETGERDWFRL…KIALGGFSPG (79 aa)) is domain II. A flexible linker region spans residues 143-155 (GIKDALSASAPLP). A domain III region spans residues 156–212 (AASGRMEDAVSALVNLGYKRLEAFQAVGETARELGDEADSSALIRAALKHLGKGLLG).

This sequence belongs to the RuvA family. As to quaternary structure, homotetramer. Forms an RuvA(8)-RuvB(12)-Holliday junction (HJ) complex. HJ DNA is sandwiched between 2 RuvA tetramers; dsDNA enters through RuvA and exits via RuvB. An RuvB hexamer assembles on each DNA strand where it exits the tetramer. Each RuvB hexamer is contacted by two RuvA subunits (via domain III) on 2 adjacent RuvB subunits; this complex drives branch migration. In the full resolvosome a probable DNA-RuvA(4)-RuvB(12)-RuvC(2) complex forms which resolves the HJ.

It is found in the cytoplasm. The RuvA-RuvB-RuvC complex processes Holliday junction (HJ) DNA during genetic recombination and DNA repair, while the RuvA-RuvB complex plays an important role in the rescue of blocked DNA replication forks via replication fork reversal (RFR). RuvA specifically binds to HJ cruciform DNA, conferring on it an open structure. The RuvB hexamer acts as an ATP-dependent pump, pulling dsDNA into and through the RuvAB complex. HJ branch migration allows RuvC to scan DNA until it finds its consensus sequence, where it cleaves and resolves the cruciform DNA. This chain is Holliday junction branch migration complex subunit RuvA, found in Paramagnetospirillum magneticum (strain ATCC 700264 / AMB-1) (Magnetospirillum magneticum).